The following is a 370-amino-acid chain: Actin-related protein 2/3 complex subunit 1A (370 aa).

WD repeat units lie at residues 6–45, 50–89, 140–179, 202–241, 244–284, and 322–365; these read FLLEPITCHAWNRDRTQIALSPNNHEVHIYKKNGGQWVKA, EHNGHITGIDWAPKSDRIVTCGADRNAYVWSQKDGVWKPT, PIRSTVLSLDWHPNNVLLAAGSCDFKCRVFSAYIKEVDEK, GTGGWVHGVSFSASGSRLAWVSHDSTVSVADASKSVQVST, TEFL…TFVS, and LHQN…SSIQ.

Belongs to the WD repeat ARPC1 family. In terms of assembly, probable component of the Arp2/3 complex in which it may replace ARPC1B.

The protein resides in the cytoplasm. It is found in the cytoskeleton. Its subcellular location is the nucleus. In terms of biological role, probably functions as a component of the Arp2/3 complex which is involved in regulation of actin polymerization and together with an activating nucleation-promoting factor (NPF) mediates the formation of branched actin networks. In addition to its role in the cytoplasmic cytoskeleton, the Arp2/3 complex also promotes actin polymerization in the nucleus, thereby regulating gene transcription and repair of damaged DNA. The chain is Actin-related protein 2/3 complex subunit 1A (ARPC1A) from Bos taurus (Bovine).